The chain runs to 131 residues: Small ribosomal subunit protein uS11 (131 aa).

The protein belongs to the universal ribosomal protein uS11 family. In terms of assembly, part of the 30S ribosomal subunit. Interacts with proteins S7 and S18. Binds to IF-3.

Located on the platform of the 30S subunit, it bridges several disparate RNA helices of the 16S rRNA. Forms part of the Shine-Dalgarno cleft in the 70S ribosome. This is Small ribosomal subunit protein uS11 from Deinococcus geothermalis (strain DSM 11300 / CIP 105573 / AG-3a).